The primary structure comprises 331 residues: D-lactate dehydrogenase (331 aa).

NAD(+) is bound by residues 155 to 156 (HI), Asp-175, 206 to 207 (VP), Asn-212, 233 to 235 (AAR), and Asp-259. The active site involves Arg-235. The active site involves Glu-264. Residue His-296 is the Proton donor of the active site.

This sequence belongs to the D-isomer specific 2-hydroxyacid dehydrogenase family. Homodimer.

The catalysed reaction is (R)-lactate + NAD(+) = pyruvate + NADH + H(+). This chain is D-lactate dehydrogenase, found in Leuconostoc mesenteroides subsp. cremoris.